The primary structure comprises 281 residues: Putative pyruvate, phosphate dikinase regulatory protein (281 aa).

Residue 153-160 coordinates ADP; sequence GISRTSKT.

This sequence belongs to the pyruvate, phosphate/water dikinase regulatory protein family. PDRP subfamily.

The catalysed reaction is N(tele)-phospho-L-histidyl/L-threonyl-[pyruvate, phosphate dikinase] + ADP = N(tele)-phospho-L-histidyl/O-phospho-L-threonyl-[pyruvate, phosphate dikinase] + AMP + H(+). It carries out the reaction N(tele)-phospho-L-histidyl/O-phospho-L-threonyl-[pyruvate, phosphate dikinase] + phosphate + H(+) = N(tele)-phospho-L-histidyl/L-threonyl-[pyruvate, phosphate dikinase] + diphosphate. Bifunctional serine/threonine kinase and phosphorylase involved in the regulation of the pyruvate, phosphate dikinase (PPDK) by catalyzing its phosphorylation/dephosphorylation. The polypeptide is Putative pyruvate, phosphate dikinase regulatory protein (Bdellovibrio bacteriovorus (strain ATCC 15356 / DSM 50701 / NCIMB 9529 / HD100)).